An 82-amino-acid polypeptide reads, in one-letter code: Putative membrane protein insertion efficiency factor (82 aa).

The protein belongs to the UPF0161 family.

It is found in the cell inner membrane. Its function is as follows. Could be involved in insertion of integral membrane proteins into the membrane. The chain is Putative membrane protein insertion efficiency factor from Rickettsia felis (strain ATCC VR-1525 / URRWXCal2) (Rickettsia azadi).